We begin with the raw amino-acid sequence, 392 residues long: S-adenosylmethionine synthase (392 aa).

H15 contacts ATP. D17 is a Mg(2+) binding site. K(+) is bound at residue E43. 2 residues coordinate L-methionine: E56 and Q99. Residues 99–109 (QSKDIAQGVDE) form a flexible loop region. Residues 173 to 175 (DGK), 239 to 240 (KF), D248, 254 to 255 (RK), A271, and K275 contribute to the ATP site. D248 lines the L-methionine pocket. K279 provides a ligand contact to L-methionine.

The protein belongs to the AdoMet synthase family. Homotetramer; dimer of dimers. Mg(2+) is required as a cofactor. K(+) serves as cofactor.

It localises to the cytoplasm. It carries out the reaction L-methionine + ATP + H2O = S-adenosyl-L-methionine + phosphate + diphosphate. Its pathway is amino-acid biosynthesis; S-adenosyl-L-methionine biosynthesis; S-adenosyl-L-methionine from L-methionine: step 1/1. Functionally, catalyzes the formation of S-adenosylmethionine (AdoMet) from methionine and ATP. The overall synthetic reaction is composed of two sequential steps, AdoMet formation and the subsequent tripolyphosphate hydrolysis which occurs prior to release of AdoMet from the enzyme. The chain is S-adenosylmethionine synthase from Finegoldia magna (strain ATCC 29328 / DSM 20472 / WAL 2508) (Peptostreptococcus magnus).